The sequence spans 202 residues: Securin (202 aa).

Ala-2 carries the post-translational modification N-acetylalanine. The interval 35–94 (LDGRSQVSTPRFGKTFDAPPALPKATRKALGTVNRATEKSVKTKGPLKQKQPSFSAKKMT) is disordered. Positions 61–64 (RKAL) match the D-box motif. 2 short sequence motifs (TEK-box) span residues 71–73 (TEK) and 94–96 (TEK). Residues 163-173 (PPSPVRMPSPP) carry the SH3-binding motif. Ser-165 is modified (phosphoserine; by CDK1).

This sequence belongs to the securin family. In terms of assembly, interacts with RPS10 and DNAJA1. Interacts with the caspase-like ESPL1, and prevents its protease activity probably by covering its active site. Interacts with TP53 and blocks its activity probably by blocking its binding to DNA. Interacts with the Ku 70 kDa subunit of ds-DNA kinase. Interacts with PTTG1IP. Phosphorylated at Ser-165 by CDK1 during mitosis. In terms of processing, phosphorylated in vitro by ds-DNA kinase. Post-translationally, ubiquitinated through 'Lys-11' linkage of ubiquitin moieties by the anaphase promoting complex (APC) at the onset of anaphase, conducting to its degradation. 'Lys-11'-linked ubiquitination is mediated by the E2 ligase UBE2C/UBCH10.

The protein localises to the cytoplasm. The protein resides in the nucleus. Regulatory protein, which plays a central role in chromosome stability, in the p53/TP53 pathway, and DNA repair. Probably acts by blocking the action of key proteins. During the mitosis, it blocks Separase/ESPL1 function, preventing the proteolysis of the cohesin complex and the subsequent segregation of the chromosomes. At the onset of anaphase, it is ubiquitinated, conducting to its destruction and to the liberation of ESPL1. Its function is however not limited to a blocking activity, since it is required to activate ESPL1. Negatively regulates the transcriptional activity and related apoptosis activity of TP53. The negative regulation of TP53 may explain the strong transforming capability of the protein when it is overexpressed. May also play a role in DNA repair via its interaction with Ku, possibly by connecting DNA damage-response pathways with sister chromatid separation. This is Securin (PTTG1) from Gorilla gorilla gorilla (Western lowland gorilla).